Reading from the N-terminus, the 351-residue chain is MIVQRVVLNSRPGKNGHPVAENFRVEEVNLPDCVNEGQVQVRTLYLSVDPYMRCRMNEDTGSDYITPWQLSQVVDGGGVGIIEESKHTNFMKGDFVTSFYWPWQTKVILDGNILEKVDPQLVDGHLSYFLGAIGMPGLTSLIGVQEKGHITAGSNQTMVVSGAAGACGSLAGQIGRLLGCSRVVGICGTPEKCLFLTSELGFDAAINYKEGNVAEQLHKLCPAGVDVYFDNVGGDISDTVISQMNQNSHIILCGQISQYNKDVPYPPPLPPAIEAIQKERNITRERFLVLNYKDKFEFGILQLSQWFKEGKLKIKETMINGLENMGAAFQSMMTGGNIGKQIVCISGDTSL.

Substrate is bound at residue 99–100; that stretch reads FY. NADP(+) contacts are provided by residues 165–168, K192, Y208, N231, 253–259, 287–289, and N337; these read GACG, CGQISQY, and FLV. 288–290 serves as a coordination point for substrate; it reads LVL.

This sequence belongs to the NADP-dependent oxidoreductase L4BD family. In terms of assembly, monomer.

It localises to the cytoplasm. The catalysed reaction is 13,14-dihydro-15-oxo-prostaglandin E2 + NAD(+) = 15-oxoprostaglandin E2 + NADH + H(+). It carries out the reaction 13,14-dihydro-15-oxo-prostaglandin E2 + NADP(+) = 15-oxoprostaglandin E2 + NADPH + H(+). The enzyme catalyses 13,14-dihydro-15-oxo-PGF2alpha + NADP(+) = 15-oxoprostaglandin F2alpha + NADPH + H(+). It catalyses the reaction 13,14-dihydro-15-oxo-prostaglandin E1 + NADP(+) = 15-oxoprostaglandin E1 + NADPH + H(+). The catalysed reaction is 13,14-dihydro-15-oxo-prostaglandin F1alpha + NADP(+) = 15-oxoprostaglandin F1alpha + NADPH + H(+). Functions as 15-oxo-prostaglandin 13-reductase and acts on 15-keto-PGE1, 15-keto-PGE2, 15-keto-PGE1-alpha and 15-keto-PGE2-alpha with highest activity towards 15-keto-PGE2. Overexpression represses transcriptional activity of PPARG and inhibits adipocyte differentiation. The polypeptide is Prostaglandin reductase 2 (PTGR2) (Bos taurus (Bovine)).